A 312-amino-acid chain; its full sequence is Pectinesterase inhibitor 10 (312 aa).

Residues M1–S25 form the signal peptide. Low complexity-rich tracts occupy residues S24 to L36 and S44 to P55. Residues S24–N141 form a disordered region. Residues S56–S75 are compositionally biased toward pro residues. Composition is skewed to low complexity over residues S76 to L85 and S93 to P104. The span at S105–S124 shows a compositional bias: pro residues. Over residues S125–S137 the composition is skewed to low complexity. Residues N141, N153, N185, and N200 are each glycosylated (N-linked (GlcNAc...) asparagine). C152 and C161 are disulfide-bonded. C218 and C268 are disulfide-bonded.

This sequence belongs to the PMEI family.

It is found in the secreted. Its subcellular location is the extracellular space. The protein localises to the apoplast. Its function is as follows. Pectin methylesterase (PME) inhibitor involved in the maintenance of cell wall integrity in response to necrotrophic pathogens. Modulates PME activity and pectin methylesterification during infection by Botrytis cinerea and contributes to resistance against the pathogen. The polypeptide is Pectinesterase inhibitor 10 (Arabidopsis thaliana (Mouse-ear cress)).